Reading from the N-terminus, the 264-residue chain is Indole-3-glycerol phosphate synthase (264 aa).

It belongs to the TrpC family.

It catalyses the reaction 1-(2-carboxyphenylamino)-1-deoxy-D-ribulose 5-phosphate + H(+) = (1S,2R)-1-C-(indol-3-yl)glycerol 3-phosphate + CO2 + H2O. The protein operates within amino-acid biosynthesis; L-tryptophan biosynthesis; L-tryptophan from chorismate: step 4/5. The protein is Indole-3-glycerol phosphate synthase of Polaromonas sp. (strain JS666 / ATCC BAA-500).